Here is a 601-residue protein sequence, read N- to C-terminus: Putative Lon protease homolog (601 aa).

The region spanning 363 to 560 (GEIVGQINGL…YQACELLFGR (198 aa)) is the Lon proteolytic domain. Active-site residues include Ser455 and Lys498.

Belongs to the peptidase S16 family.

This Haemophilus influenzae (strain ATCC 51907 / DSM 11121 / KW20 / Rd) protein is Putative Lon protease homolog.